The following is a 357-amino-acid chain: Peptide chain release factor 1 (357 aa).

Q236 carries the post-translational modification N5-methylglutamine. Over residues 284–293 (RRKKDQERAN) the composition is skewed to basic and acidic residues. The interval 284–313 (RRKKDQERANNRRKQIGSGDRSERIRTYNF) is disordered.

This sequence belongs to the prokaryotic/mitochondrial release factor family. In terms of processing, methylated by PrmC. Methylation increases the termination efficiency of RF1.

It is found in the cytoplasm. Its function is as follows. Peptide chain release factor 1 directs the termination of translation in response to the peptide chain termination codons UAG and UAA. The chain is Peptide chain release factor 1 from Rickettsia bellii (strain RML369-C).